We begin with the raw amino-acid sequence, 489 residues long: Transcription factor TGAL11 (489 aa).

Residues 87–99 (AATATATARPPAT) are compositionally biased toward low complexity. A disordered region spans residues 87-181 (AATATATARP…SDHRMTKTLD (95 aa)). Polar residues predominate over residues 121–139 (SNVTADTTDSESSSKNNGD). A compositionally biased stretch (low complexity) spans 148–159 (ASQFDQIPQQQQ). Residues 171-181 (HSDHRMTKTLD) show a composition bias toward basic and acidic residues. A bZIP domain is found at 181 to 225 (DPKIMRRLAQNREAARKSRLRKKAYIQQLESSKLRLAQMEQDLER). The segment at 183–203 (KIMRRLAQNREAARKSRLRKK) is basic motif. The segment at 209 to 223 (LESSKLRLAQMEQDL) is leucine-zipper. The DOG1 domain occupies 245 to 460 (AAMFDAEYGR…RALSSLWASR (216 aa)).

Belongs to the bZIP family.

Its subcellular location is the nucleus. Its function is as follows. Transcriptional regulator involved in defense response. This Oryza sativa subsp. japonica (Rice) protein is Transcription factor TGAL11.